A 136-amino-acid chain; its full sequence is Peptide methionine sulfoxide reductase MsrB (136 aa).

One can recognise a MsrB domain in the interval 7–129 (SSSHENTLTE…NSASLSFTDD (123 aa)). Residues Cys46, Cys49, Cys95, and Cys98 each contribute to the Zn(2+) site. The active-site Nucleophile is the Cys118.

It belongs to the MsrB Met sulfoxide reductase family. The cofactor is Zn(2+).

It carries out the reaction L-methionyl-[protein] + [thioredoxin]-disulfide + H2O = L-methionyl-(R)-S-oxide-[protein] + [thioredoxin]-dithiol. This Erwinia tasmaniensis (strain DSM 17950 / CFBP 7177 / CIP 109463 / NCPPB 4357 / Et1/99) protein is Peptide methionine sulfoxide reductase MsrB.